The chain runs to 241 residues: tRNA (guanine-N(7)-)-methyltransferase (241 aa).

A compositionally biased stretch (polar residues) spans 1–10; the sequence is MTESNDTPIQ. The disordered stretch occupies residues 1-20; sequence MTESNDTPIQTEEGDERQHR. S-adenosyl-L-methionine contacts are provided by glutamate 71, glutamate 96, aspartate 123, and aspartate 146. Residue aspartate 146 is part of the active site. Substrate contacts are provided by residues lysine 150, aspartate 182, and 219-222; that span reads TKFE.

It belongs to the class I-like SAM-binding methyltransferase superfamily. TrmB family.

It carries out the reaction guanosine(46) in tRNA + S-adenosyl-L-methionine = N(7)-methylguanosine(46) in tRNA + S-adenosyl-L-homocysteine. The protein operates within tRNA modification; N(7)-methylguanine-tRNA biosynthesis. Functionally, catalyzes the formation of N(7)-methylguanine at position 46 (m7G46) in tRNA. This Pseudomonas fluorescens (strain Pf0-1) protein is tRNA (guanine-N(7)-)-methyltransferase.